The primary structure comprises 1770 residues: Transposon Ty2-DR3 Gag-Pol polyprotein (1770 aa).

6 stretches are compositionally biased toward polar residues: residues 1-11 (MESQQLHQNPH), 19-39 (ASVT…SASN), 49-60 (KVNSQQETTPGT), 366-390 (VSRT…NSSK), 399-408 (IATSSKFSRV), and 415-435 (ESTV…GQQQ). 2 disordered regions span residues 1–89 (MESQ…QQHG) and 355–449 (SQYK…SNDE). Residues 295-397 (ENNINVSDRL…SSKPRAAKAH (103 aa)) form an RNA-binding region. The active-site For protease activity; shared with dimeric partner is Asp457. The integrase-type zinc finger-like stretch occupies residues 579–636 (NVNKSKSVNKYPYPLIHRMLGHANFRSIQKSLKKNAVTYLKESDIEWSNASTYQCPDC). The 176-residue stretch at 656 to 831 (ESYEPFQYLH…AGLDITTILP (176 aa)) folds into the Integrase catalytic domain. Residues Asp667 and Asp732 each coordinate Mg(2+). Disordered stretches follow at residues 1005 to 1038 (GGTI…MIDL) and 1057 to 1205 (GGTE…TEIE). Composition is skewed to polar residues over residues 1009–1024 (ESDT…FTAR) and 1065–1082 (QRNS…STPS). Positions 1193–1227 (KKRSLEDNETEIEVSRDTWNNKNMRSLEPPRSKKR) match the Bipartite nuclear localization signal motif. Residues 1353 to 1491 (NDYYITQLDI…DILGLEIKYQ (139 aa)) enclose the Reverse transcriptase Ty1/copia-type domain. The Mg(2+) site is built by Asp1361, Asp1442, Asp1443, Asp1625, Glu1667, and Asp1700. One can recognise an RNase H Ty1/copia-type domain in the interval 1625–1767 (DASYGNQPYY…IKTFKLLTNK (143 aa)).

The capsid protein forms a homotrimer, from which the VLPs are assembled. The protease is a homodimer, whose active site consists of two apposed aspartic acid residues. Post-translationally, initially, virus-like particles (VLPs) are composed of the structural unprocessed proteins Gag and Gag-Pol, and also contain the host initiator methionine tRNA (tRNA(i)-Met) which serves as a primer for minus-strand DNA synthesis, and a dimer of genomic Ty RNA. Processing of the polyproteins occurs within the particle and proceeds by an ordered pathway, called maturation. First, the protease (PR) is released by autocatalytic cleavage of the Gag-Pol polyprotein, and this cleavage is a prerequisite for subsequent processing at the remaining sites to release the mature structural and catalytic proteins. Maturation takes place prior to the RT reaction and is required to produce transposition-competent VLPs.

Its subcellular location is the cytoplasm. The protein localises to the nucleus. The enzyme catalyses DNA(n) + a 2'-deoxyribonucleoside 5'-triphosphate = DNA(n+1) + diphosphate. It catalyses the reaction Endonucleolytic cleavage to 5'-phosphomonoester.. Capsid protein (CA) is the structural component of the virus-like particle (VLP), forming the shell that encapsulates the retrotransposons dimeric RNA genome. The particles are assembled from trimer-clustered units and there are holes in the capsid shells that allow for the diffusion of macromolecules. CA also has nucleocapsid-like chaperone activity, promoting primer tRNA(i)-Met annealing to the multipartite primer-binding site (PBS), dimerization of Ty2 RNA and initiation of reverse transcription. In terms of biological role, the aspartyl protease (PR) mediates the proteolytic cleavages of the Gag and Gag-Pol polyproteins after assembly of the VLP. Functionally, reverse transcriptase/ribonuclease H (RT) is a multifunctional enzyme that catalyzes the conversion of the retro-elements RNA genome into dsDNA within the VLP. The enzyme displays a DNA polymerase activity that can copy either DNA or RNA templates, and a ribonuclease H (RNase H) activity that cleaves the RNA strand of RNA-DNA heteroduplexes during plus-strand synthesis and hydrolyzes RNA primers. The conversion leads to a linear dsDNA copy of the retrotransposon that includes long terminal repeats (LTRs) at both ends. Its function is as follows. Integrase (IN) targets the VLP to the nucleus, where a subparticle preintegration complex (PIC) containing at least integrase and the newly synthesized dsDNA copy of the retrotransposon must transit the nuclear membrane. Once in the nucleus, integrase performs the integration of the dsDNA into the host genome. This Saccharomyces cerevisiae (strain ATCC 204508 / S288c) (Baker's yeast) protein is Transposon Ty2-DR3 Gag-Pol polyprotein (TY2B-DR3).